A 473-amino-acid chain; its full sequence is 3-isopropylmalate dehydratase large subunit (473 aa).

Residues Cys348, Cys413, and Cys416 each contribute to the [4Fe-4S] cluster site.

It belongs to the aconitase/IPM isomerase family. LeuC type 1 subfamily. In terms of assembly, heterodimer of LeuC and LeuD. Requires [4Fe-4S] cluster as cofactor.

It catalyses the reaction (2R,3S)-3-isopropylmalate = (2S)-2-isopropylmalate. It functions in the pathway amino-acid biosynthesis; L-leucine biosynthesis; L-leucine from 3-methyl-2-oxobutanoate: step 2/4. In terms of biological role, catalyzes the isomerization between 2-isopropylmalate and 3-isopropylmalate, via the formation of 2-isopropylmaleate. The sequence is that of 3-isopropylmalate dehydratase large subunit from Parvibaculum lavamentivorans (strain DS-1 / DSM 13023 / NCIMB 13966).